The sequence spans 79 residues: Small ribosomal subunit protein uS17 (79 aa).

Belongs to the universal ribosomal protein uS17 family. As to quaternary structure, part of the 30S ribosomal subunit.

One of the primary rRNA binding proteins, it binds specifically to the 5'-end of 16S ribosomal RNA. The sequence is that of Small ribosomal subunit protein uS17 from Rhizobium leguminosarum bv. trifolii (strain WSM2304).